Here is a 396-residue protein sequence, read N- to C-terminus: Cathepsin E (396 aa).

Residues 1 to 19 (MKTLPLLLLLLLDLGQAQG) form the signal peptide. The propeptide at 20 to 53 (TLDRVPLRRQPSLRKKLRAQGQLSEFWKAHKVDM) is activation peptide. Residues 78-392 (YFGTISIGSP…DRGSNRVGLA (315 aa)) enclose the Peptidase A1 domain. Asparagine 90 carries an N-linked (GlcNAc...) asparagine glycan. Residue aspartate 96 is part of the active site. Disulfide bonds link cysteine 109/cysteine 114 and cysteine 272/cysteine 276. Residue aspartate 281 is part of the active site. Cysteine 314 and cysteine 351 are oxidised to a cystine.

It belongs to the peptidase A1 family. As to quaternary structure, homodimer; disulfide-linked. In terms of processing, glycosylated. The nature of the carbohydrate chain varies between cell types.

Its subcellular location is the endosome. The enzyme catalyses Similar to cathepsin D, but slightly broader specificity.. Functionally, may have a role in immune function. Probably involved in the processing of antigenic peptides during MHC class II-mediated antigen presentation. May play a role in activation-induced lymphocyte depletion in the thymus, and in neuronal degeneration and glial cell activation in the brain. The chain is Cathepsin E (CTSE) from Oryctolagus cuniculus (Rabbit).